The primary structure comprises 970 residues: MVNSSRVQPQQPGDARRSPAPRAPGPGRLMAGGAIAGAGLAAPGGLREQRGLEIEMERIRQAAARDPPAGASASPSPPLSSCSRQAWSRDNPGFEAEEEEEEEEVEGEEGGMVVEMDVEWRPGSRRSASSSAVSSAGARGRGLGGYHGAGHPSGRRRQREDQGPPSPSPAGGGDPLHRHLPLDGQHPRVAWAERLVRGLRGLWGTRLMEESSTDREKYLKSVLRELATYLLFLIVLCILTYGMMSSSVYYYTRIMSQLFLDTPVSKMEKTNFKTLSSMEDFWKFTEGALLDGLYWKTQPSNRTEADNRSFIYYENLLLGVPRIRQLRVRNGSCSIPLDLRDEIKECYDVYSVSSEDRAPFGPRNGTAWIYTSEKDLNGSSHWGMIATYSGAGYYLDLSRTREETAAQVANLKKNVWLDRGTRAIFIDFTVYNANINLFCVIRLLIEFPATGGVIPSWQFQPVKLIRYVTTFDFFLAACEIIFCLFILYYVVEEILEIRIHKLHYFRSFWNCLDVVIIVLSVVAIGINIYRTSNVEALLQFLEDQNTFPNFENLAYWQTQFNNIAAVIVFFVWIKLFKFINFNRTMSQLSTTMSRCAKDLFGFAIMFFIIFLAYAQLAYLVFGTQVDDFSTFQECIFTQFRIILGDINFAEIEEANRVLGPIYFTTFVFFMFFILLNMFLAIINDTYSEVKSDLAQQKAEMELSDLIRKGYHKALIKLKLKKNTVDDISESLRQGGGKLNFDELRQDLKGKGHTDAEIEAIFTKYDQDGDQELTEHEHQQMRDDLEKEREDLDLDHSSLPRPMSSRSFPRSLDDSEEEDDDDSGHSSRRRGSISSGVSYEEFQVLVRRVDRMEHSIGSIVSKIDAVIVKLEIMERAKLKRREVLGRLLDGVAEDERLGRDNEIHREQMERLVREELERWESDDAASQISHGLGTPLGLNGQPRPRSSRPSSSQSTEGMEGGGGNGSANIHV.

Polar residues predominate over residues 1–11; that stretch reads MVNSSRVQPQQ. Residues 1–182 form a disordered region; the sequence is MVNSSRVQPQ…GDPLHRHLPL (182 aa). The Cytoplasmic segment spans residues 1–221; the sequence is MVNSSRVQPQ…STDREKYLKS (221 aa). Positions 25 to 45 are enriched in low complexity; the sequence is GPGRLMAGGAIAGAGLAAPGG. The segment covering 47-60 has biased composition (basic and acidic residues); the sequence is REQRGLEIEMERIR. A compositionally biased stretch (low complexity) spans 62-83; that stretch reads AAARDPPAGASASPSPPLSSCS. Phosphoserine is present on residues Ser76 and Ser80. Positions 95–109 are enriched in acidic residues; it reads EAEEEEEEEEVEGEE. The segment covering 125-138 has biased composition (low complexity); that stretch reads RRSASSSAVSSAGA. Arg139 is modified (omega-N-methylarginine). Gly residues predominate over residues 139-148; the sequence is RGRGLGGYHG. The chain crosses the membrane as a helical span at residues 222 to 243; that stretch reads VLRELATYLLFLIVLCILTYGM. Residues 244–470 are Extracellular-facing; sequence MSSSVYYYTR…PVKLIRYVTT (227 aa). 3 N-linked (GlcNAc...) asparagine glycosylation sites follow: Asn301, Asn307, and Asn330. A disulfide bridge links Cys333 with Cys346. Asn364 and Asn377 each carry an N-linked (GlcNAc...) asparagine glycan. Residues 471–491 traverse the membrane as a helical segment; the sequence is FDFFLAACEIIFCLFILYYVV. Residues 492–507 lie on the Cytoplasmic side of the membrane; sequence EEILEIRIHKLHYFRS. The helical transmembrane segment at 508–528 threads the bilayer; it reads FWNCLDVVIIVLSVVAIGINI. Residues 529–554 are Extracellular-facing; that stretch reads YRTSNVEALLQFLEDQNTFPNFENLA. A helical membrane pass occupies residues 555-575; sequence YWQTQFNNIAAVIVFFVWIKL. Gln559 contributes to the cholesterol binding site. The Cytoplasmic segment spans residues 576–599; sequence FKFINFNRTMSQLSTTMSRCAKDL. Residues 600 to 621 form a helical membrane-spanning segment; it reads FGFAIMFFIIFLAYAQLAYLVF. The Extracellular portion of the chain corresponds to 622–633; the sequence is GTQVDDFSTFQE. The segment at residues 634-648 is an intramembrane region (pore-forming); the sequence is CIFTQFRIILGDINF. Leu643 is a Ca(2+) binding site. Residues 643 to 645 carry the Selectivity filter motif; it reads LGD. Over 649–656 the chain is Extracellular; that stretch reads AEIEEANR. Residues 657–677 traverse the membrane as a helical segment; that stretch reads VLGPIYFTTFVFFMFFILLNM. Residues 678–970 lie on the Cytoplasmic side of the membrane; it reads FLAIINDTYS…GGNGSANIHV (293 aa). Residues 750–785 form the EF-hand domain; that stretch reads KGHTDAEIEAIFTKYDQDGDQELTEHEHQQMRDDLE. 5 residues coordinate Ca(2+): Asp765, Asp767, Asp769, Glu771, and Glu776. The tract at residues 766–833 is disordered; the sequence is QDGDQELTEH…HSSRRRGSIS (68 aa). Over residues 772 to 797 the composition is skewed to basic and acidic residues; it reads LTEHEHQQMRDDLEKEREDLDLDHSS. The span at 798–809 shows a compositional bias: low complexity; the sequence is LPRPMSSRSFPR. Phosphoserine occurs at positions 803, 810, 814, and 831. The segment at 805–824 is linker; it reads RSFPRSLDDSEEEDDDDSGH. An important for interaction with PACS1 and PACS2 region spans residues 812–823; the sequence is DDSEEEDDDDSG. Residues 835–874 adopt a coiled-coil conformation; it reads GVSYEEFQVLVRRVDRMEHSIGSIVSKIDAVIVKLEIMER. The disordered stretch occupies residues 921-970; that stretch reads DDAASQISHGLGTPLGLNGQPRPRSSRPSSSQSTEGMEGGGGNGSANIHV. The segment covering 940 to 956 has biased composition (low complexity); it reads QPRPRSSRPSSSQSTEG.

It belongs to the polycystin family. As to quaternary structure, homotetramer. Component of the heterotetrameric polycystin channel complex with PKD1; the tetramer contains one PKD1 chain and three PKD2 chains. Isoform 1 interacts with PKD1 while isoform 3 does not. Interacts with PKD1L1; probably forms a Ca(2+) channel. Interacts with CD2AP. Interacts with HAX1. Interacts with NEK8. Part of a complex containing AKAP5, ADCY5, ADCY6 and PDE4C. Interacts (via C-terminus) with TRPV4 (via C-terminus). Interacts (via C-terminal acidic region) with PACS1 and PACS2; these interactions retain the protein in the endoplasmic reticulum and prevent trafficking to the cell membrane. Interacts with TMEM33. Form a heterotetramer with TRPC1 with a 2:2 stoichiometry; has distinct channel properties separate from PKD2 or TRPC1 homomers alone. Interacts with TMEM120A; TMEM120A inhibits PKD2 channel activity through the physical association of PKD2 with TMEM120A. Interacts (via N-terminus) with RYR2; regulates RYR2 channel activity. In terms of processing, N-glycosylated. The four subunits in a tetramer probably differ in the extent of glycosylation; simultaneous glycosylation of all experimentally validated sites would probably create steric hindrance. Post-translationally, phosphorylated. Phosphorylation is important for protein function; a mutant that lacks the N-terminal phosphorylation sites cannot complement a zebrafish pkd2-deficient mutant. PKD-mediated phosphorylation at the C-terminus regulates its function in the release of Ca(2+) stores from the endoplasmic reticulum. Phosphorylation at Ser-814 regulates PKD2 trafficking. Phosphorylation at Ser-76 is required for PKD2 trafficking to or retention at the lateral plasma membrane. Phosphorylation at Ser-803, Ser-814 and Ser-831 regulates PKD2 channel activity. Sumoylated by SUMO1; sumoylation regulates PKD2 membrane recycling and is necessary for intravascular pressure-induced arterial contractility. In terms of tissue distribution, expressed in mesenchymally derived structures in the developing embryo at day 12.5. In adult, mostly expressed in kidney.

It is found in the cell projection. It localises to the cilium membrane. The protein localises to the endoplasmic reticulum membrane. Its subcellular location is the cell membrane. The protein resides in the basolateral cell membrane. It is found in the cytoplasmic vesicle membrane. It localises to the golgi apparatus. The protein localises to the vesicle. Its subcellular location is the secreted. The protein resides in the extracellular exosome. It catalyses the reaction K(+)(in) = K(+)(out). It carries out the reaction Na(+)(in) = Na(+)(out). The catalysed reaction is Ca(2+)(in) = Ca(2+)(out). With respect to regulation, channel activity is regulated by phosphorylation. Channel activity is regulated by intracellular Ca(2+). At the endoplasmic reticulum membrane (ER), TMEM33 enhances its channel activity. TMEM120A inhibits the channel activity of PKD2, and mediates mechanosensitivity of the PKD2-TMEM120A channel complex. PKD1/PKD2 complex on the plasma membrane is activated by PKD1 N-terminus. Its function is as follows. Forms a nonselective cation channel. Can function as a homotetrameric ion channel or can form heteromer with PKD1. Displays distinct function depending on its subcellular localization and regulation by its binding partners. Functions as a cation channel, with a preference for monovalent cations over divalent cations that allows K(+), Na(+) and Ca(2+) influx, with low selectivity for Ca(2+). Involved in fluid-flow mechanosensation in the primary cilium in renal epithelium. In the endoplasmic reticulum, likely functions as a K(+) channel to facilitate Ca(2+) release. The heterotetrameric PKD1/PKD2 channel has higher Ca(2+) permeability than homomeric PKD2 channel and acts as a primarily Ca(2+)-permeable channel. Interacts with and acts as a regulator of a number of other channels, such as TRPV4, TRPC1, IP3R, RYR2, ultimately further affecting intracellular signaling, to modulate intracellular Ca(2+) signaling. Together with TRPV4, forms mechano- and thermosensitive channels in cilium. In cardiomyocytes, PKD2 modulates Ca(2+) release from stimulated RYR2 receptors through direct association. Also involved in left-right axis specification via its role in sensing nodal flow; forms a complex with PKD1L1 in cilia to facilitate flow detection in left-right patterning. Acts as a regulator of cilium length together with PKD1. Mediates systemic blood pressure and contributes to the myogenic response in cerebral arteries though vasoconstriction. The protein is Polycystin-2 of Bos taurus (Bovine).